The following is a 115-amino-acid chain: Holo-[acyl-carrier-protein] synthase (115 aa).

Residues aspartate 5 and glutamate 51 each contribute to the Mg(2+) site.

This sequence belongs to the P-Pant transferase superfamily. AcpS family. Requires Mg(2+) as cofactor.

It is found in the cytoplasm. The enzyme catalyses apo-[ACP] + CoA = holo-[ACP] + adenosine 3',5'-bisphosphate + H(+). Functionally, transfers the 4'-phosphopantetheine moiety from coenzyme A to a Ser of acyl-carrier-protein. This is Holo-[acyl-carrier-protein] synthase from Helicobacter acinonychis (strain Sheeba).